Consider the following 100-residue polypeptide: MQLSPQEKDKLLIFTASLVAERRKARGLKLNYPEAVAYISAAILEGARDGRTVAELMNYGATLLSRDEVMEGVPEMLPEVQVEATFPDGTKLVTVHEPIR.

This sequence belongs to the urease gamma subunit family. In terms of assembly, heterotrimer of UreA (gamma), UreB (beta) and UreC (alpha) subunits. Three heterotrimers associate to form the active enzyme.

The protein resides in the cytoplasm. The catalysed reaction is urea + 2 H2O + H(+) = hydrogencarbonate + 2 NH4(+). It functions in the pathway nitrogen metabolism; urea degradation; CO(2) and NH(3) from urea (urease route): step 1/1. In Synechocystis sp. (strain ATCC 27184 / PCC 6803 / Kazusa), this protein is Urease subunit gamma.